The following is a 146-amino-acid chain: Protein ADM2 (146 aa).

The N-terminal stretch at 1 to 25 (MAQLLMVTVTFGCISLLYLLPGTLS) is a signal peptide. The propeptide occupies 26–96 (GSLGKGLRPR…HPGPQRHVGS (71 aa)). The interval 29 to 99 (GKGLRPREPP…PQRHVGSRRP (71 aa)) is disordered. A disulfide bridge connects residues cysteine 108 and cysteine 113. The residue at position 145 (tyrosine 145) is a Tyrosine amide.

This sequence belongs to the adrenomedullin family. In terms of tissue distribution, expression was restricted to the intermediate and anterior lobes of the pituitary.

It localises to the secreted. Functionally, intermedin/ADM2 is a peptide hormone that plays a role as physiological regulator of gastrointestinal and cardiovascular bioactivities mediated by the CALCRL-RAMPs receptor complexes. Activates the cAMP-dependent pathway through interaction with CALCRL-RAMP3 receptor complex. This chain is Protein ADM2, found in Rattus norvegicus (Rat).